The sequence spans 311 residues: Tryptophan 2,3-dioxygenase (311 aa).

Residues M1–D37 are disordered. Low complexity predominate over residues A17 to H27. Substrate-binding positions include F80 to H84, Y142, and R146. Residue H269 participates in heme binding. T283 provides a ligand contact to substrate.

The protein belongs to the tryptophan 2,3-dioxygenase family. In terms of assembly, homotetramer. Heme serves as cofactor.

It carries out the reaction L-tryptophan + O2 = N-formyl-L-kynurenine. The protein operates within amino-acid degradation; L-tryptophan degradation via kynurenine pathway; L-kynurenine from L-tryptophan: step 1/2. Its function is as follows. Heme-dependent dioxygenase that catalyzes the oxidative cleavage of the L-tryptophan (L-Trp) pyrrole ring and converts L-tryptophan to N-formyl-L-kynurenine. Catalyzes the oxidative cleavage of the indole moiety. This Burkholderia cenocepacia (strain ATCC BAA-245 / DSM 16553 / LMG 16656 / NCTC 13227 / J2315 / CF5610) (Burkholderia cepacia (strain J2315)) protein is Tryptophan 2,3-dioxygenase.